An 81-amino-acid chain; its full sequence is Photosystem I iron-sulfur center (81 aa).

4Fe-4S ferredoxin-type domains lie at 2–31 and 39–68; these read SHTV…MVPW and VASS…IRVY. [4Fe-4S] cluster is bound by residues C11, C14, C17, C21, C48, C51, C54, and C58.

As to quaternary structure, the cyanobacterial PSI reaction center is composed of one copy each of PsaA,B,C,D,E,F,I,J,K,L,M and X, and forms trimeric complexes. Requires [4Fe-4S] cluster as cofactor.

Its subcellular location is the cellular thylakoid membrane. The enzyme catalyses reduced [plastocyanin] + hnu + oxidized [2Fe-2S]-[ferredoxin] = oxidized [plastocyanin] + reduced [2Fe-2S]-[ferredoxin]. Apoprotein for the two 4Fe-4S centers FA and FB of photosystem I (PSI); essential for photochemical activity. FB is the terminal electron acceptor of PSI, donating electrons to ferredoxin. The C-terminus interacts with PsaA/B/D and helps assemble the protein into the PSI complex. Required for binding of PsaD and PsaE to PSI. PSI is a plastocyanin/cytochrome c6-ferredoxin oxidoreductase, converting photonic excitation into a charge separation, which transfers an electron from the donor P700 chlorophyll pair to the spectroscopically characterized acceptors A0, A1, FX, FA and FB in turn. The protein is Photosystem I iron-sulfur center of Trichormus variabilis (strain ATCC 29413 / PCC 7937) (Anabaena variabilis).